A 306-amino-acid polypeptide reads, in one-letter code: Cilia- and flagella-associated protein 73 (306 aa).

2 coiled-coil regions span residues Leu49–Glu139 and Gln197–Lys231.

The protein belongs to the CFAP73 family.

The protein localises to the cytoplasm. Its subcellular location is the cytoskeleton. It localises to the cilium axoneme. May play a role in ciliary/flagellar motility by regulating the assembly and the activity of axonemal inner dynein arm. This chain is Cilia- and flagella-associated protein 73, found in Mus musculus (Mouse).